The following is a 227-amino-acid chain: PKHD-type hydroxylase Dtpsy_0528 (227 aa).

A Fe2OG dioxygenase domain is found at 78-178 (TIYPPKFNRY…RVASFFWIES (101 aa)). Fe cation-binding residues include His-96, Asp-98, and His-159. 2-oxoglutarate is bound at residue Arg-169.

Fe(2+) is required as a cofactor. The cofactor is L-ascorbate.

This is PKHD-type hydroxylase Dtpsy_0528 from Acidovorax ebreus (strain TPSY) (Diaphorobacter sp. (strain TPSY)).